A 632-amino-acid polypeptide reads, in one-letter code: Biosynthetic arginine decarboxylase (632 aa).

Lys101 is modified (N6-(pyridoxal phosphate)lysine). Phe281–Tyr291 serves as a coordination point for substrate.

Belongs to the Orn/Lys/Arg decarboxylase class-II family. SpeA subfamily. Mg(2+) is required as a cofactor. Requires pyridoxal 5'-phosphate as cofactor.

The catalysed reaction is L-arginine + H(+) = agmatine + CO2. Its pathway is amine and polyamine biosynthesis; agmatine biosynthesis; agmatine from L-arginine: step 1/1. In terms of biological role, catalyzes the biosynthesis of agmatine from arginine. This chain is Biosynthetic arginine decarboxylase, found in Salmonella dublin (strain CT_02021853).